Reading from the N-terminus, the 710-residue chain is Cyclin-dependent kinase G-2 (710 aa).

The interval 1 to 350 is disordered; the sequence is MAAGRHGGYR…ETPEPVKPPH (350 aa). A compositionally biased stretch (basic and acidic residues) spans 8–30; sequence GYRDYEARERELDAEASRRSKEQ. Residues 31 to 40 show a composition bias toward basic residues; the sequence is QHHHHPSGRH. A compositionally biased stretch (basic and acidic residues) spans 41-64; it reads QRGDSDPRCEADRRRDGGRSRGGR. The segment covering 124–133 has biased composition (low complexity); it reads SVVAASASSP. Residues 144–163 show a composition bias toward basic and acidic residues; sequence WDRDSPKPMHSDVAKGKKAV. A compositionally biased stretch (pro residues) spans 170–182; sequence LPLPPPPPLPPQD. Composition is skewed to basic and acidic residues over residues 183–195 and 209–218; these read HIPERLAVEKSPM and LQEHAESRVM. Over residues 299–308 the composition is skewed to acidic residues; that stretch reads DENEDLEVDK. The segment covering 335 to 344 has biased composition (basic and acidic residues); that stretch reads YEVRRSETPE. One can recognise a Protein kinase domain in the interval 365 to 656; it reads FERLNKINEG…ADAALQHEWF (292 aa). ATP-binding positions include 371–379 and Lys-394; that span reads INEGTYGVV. Thr-375 carries the post-translational modification Phosphothreonine. Position 376 is a phosphotyrosine (Tyr-376). Asp-489 (proton acceptor) is an active-site residue. The residue at position 516 (Ser-516) is a Phosphoserine. At Thr-522 the chain carries Phosphothreonine.

This sequence belongs to the protein kinase superfamily. CMGC Ser/Thr protein kinase family. CDC2/CDKX subfamily.

It catalyses the reaction L-seryl-[protein] + ATP = O-phospho-L-seryl-[protein] + ADP + H(+). It carries out the reaction L-threonyl-[protein] + ATP = O-phospho-L-threonyl-[protein] + ADP + H(+). The catalysed reaction is [DNA-directed RNA polymerase] + ATP = phospho-[DNA-directed RNA polymerase] + ADP + H(+). The sequence is that of Cyclin-dependent kinase G-2 (CDKG-2) from Oryza sativa subsp. indica (Rice).